Reading from the N-terminus, the 105-residue chain is T cell receptor alpha variable 40 (105 aa).

Residues 1-19 (MNSSLDFLILILMFGGTSS) form the signal peptide. Residues 20-105 (NSVKQTGQIT…DSAVYYCLLG (86 aa)) enclose the Ig-like domain. Asparagine 39 carries an N-linked (GlcNAc...) asparagine glycan. Cysteine 40 and cysteine 102 are disulfide-bonded.

As to quaternary structure, alpha-beta TR is a heterodimer composed of an alpha and beta chain; disulfide-linked. The alpha-beta TR is associated with the transmembrane signaling CD3 coreceptor proteins to form the TR-CD3 (TcR or TCR). The assembly of alpha-beta TR heterodimers with CD3 occurs in the endoplasmic reticulum where a single alpha-beta TR heterodimer associates with one CD3D-CD3E heterodimer, one CD3G-CD3E heterodimer and one CD247 homodimer forming a stable octameric structure. CD3D-CD3E and CD3G-CD3E heterodimers preferentially associate with TR alpha and TR beta chains, respectively. The association of the CD247 homodimer is the last step of TcR assembly in the endoplasmic reticulum and is required for transport to the cell surface.

It localises to the cell membrane. In terms of biological role, v region of the variable domain of T cell receptor (TR) alpha chain that participates in the antigen recognition. Alpha-beta T cell receptors are antigen specific receptors which are essential to the immune response and are present on the cell surface of T lymphocytes. Recognize peptide-major histocompatibility (MH) (pMH) complexes that are displayed by antigen presenting cells (APC), a prerequisite for efficient T cell adaptive immunity against pathogens. Binding of alpha-beta TR to pMH complex initiates TR-CD3 clustering on the cell surface and intracellular activation of LCK that phosphorylates the ITAM motifs of CD3G, CD3D, CD3E and CD247 enabling the recruitment of ZAP70. In turn ZAP70 phosphorylates LAT, which recruits numerous signaling molecules to form the LAT signalosome. The LAT signalosome propagates signal branching to three major signaling pathways, the calcium, the mitogen-activated protein kinase (MAPK) kinase and the nuclear factor NF-kappa-B (NF-kB) pathways, leading to the mobilization of transcription factors that are critical for gene expression and essential for T cell growth and differentiation. The T cell repertoire is generated in the thymus, by V-(D)-J rearrangement. This repertoire is then shaped by intrathymic selection events to generate a peripheral T cell pool of self-MH restricted, non-autoaggressive T cells. Post-thymic interaction of alpha-beta TR with the pMH complexes shapes TR structural and functional avidity. The chain is T cell receptor alpha variable 40 from Homo sapiens (Human).